The primary structure comprises 1258 residues: Phosphatidylinositol 3,4,5-trisphosphate 5-phosphatase 2 (1258 aa).

Residues 21–117 (WYHRDLSRAA…GLVCALLLPV (97 aa)) form the SH2 domain. Basic and acidic residues predominate over residues 119 to 132 (GEREPDPPDDRDAS). The segment at 119 to 180 (GEREPDPPDD…AESAPNGLST (62 aa)) is disordered. Ser-132 carries the post-translational modification Phosphoserine. Residues 145-155 (SGSTSISAPTG) show a composition bias toward polar residues. The segment covering 156–166 (PSSPLPAPETP) has biased composition (pro residues). The residue at position 165 (Thr-165) is a Phosphothreonine. A phosphoserine mark is found at Ser-241 and Ser-352. Tyr-886 carries the phosphotyrosine modification. Phosphoserine is present on Ser-890. The disordered stretch occupies residues 897–1118 (GAKSKAPSVS…FLGEVASGDD (222 aa)). The span at 938 to 950 (PPPTGRPPAPPRA) shows a compositional bias: pro residues. The SH3-binding signature appears at 944–949 (PPAPPR). Residues 951–965 (APREEPLTPRLKPEG) show a composition bias toward basic and acidic residues. At Thr-958 the chain carries Phosphothreonine. An NPXY motif motif is present at residues 983–986 (NPAY). The residue at position 986 (Tyr-986) is a Phosphotyrosine; by SRC. 3 stretches are compositionally biased toward pro residues: residues 996–1007 (LLPPEPPSPARA), 1048–1059 (LPPPDFPPPPLP), and 1087–1104 (GPPP…PGPS). Position 1131 is a phosphoserine (Ser-1131). Residues Tyr-1135 and Tyr-1162 each carry the phosphotyrosine modification. An SAM domain is found at 1196-1258 (LGEAGMSAWL…LLLDTLQLSK (63 aa)). Phosphoserine is present on Ser-1257.

This sequence belongs to the inositol 1,4,5-trisphosphate 5-phosphatase family. In terms of assembly, interacts with tyrosine phosphorylated form of SHC1. Interacts with EGFR. Upon stimulation by the EGF signaling pathway, it forms a complex with SHC1 and EGFR. Interacts with cytoskeletal protein SORBS3/vinexin, promoting its localization to the periphery of cells. Forms a complex with filamin (FLNA or FLNB), actin, GPIb (GP1BA or GP1BB) that regulates cortical and submembraneous actin. Interacts with c-Met/MET, when c-Met/MET is phosphorylated on 'Tyr-1356'. Interacts with p130Cas/BCAR1. Interacts with CENTD3/ARAP3 via its SAM domain. Interacts with c-Cbl/CBL and CAP/SORBS1. Interacts with activated EPHA2 receptor. Interacts with receptor FCGR2A. Interacts with receptor FCGR2B. Interacts with tyrosine kinase ABL1. Interacts with tyrosine kinase TEC. Interacts with CSF1R. Interacts (via N-terminus) with SH3YL1 (via SH3 domain). Interacts with FCRL6 (tyrosine phosphorylated form). Interacts (via SH2 domain) with tyrosine phosphorylated KLRC1 (via ITIM). Interacts with NEDD9/HEF1. Tyrosine phosphorylated by the members of the SRC family after exposure to a diverse array of extracellular stimuli such as insulin, growth factors such as EGF or PDGF, chemokines, integrin ligands and hypertonic and oxidative stress. May be phosphorylated upon IgG receptor FCGR2B-binding. Phosphorylated at Tyr-986 following cell attachment and spreading. Phosphorylated at Tyr-1162 following EGF signaling pathway stimulation. Phosphorylated at Thr-958 in response to PDGF. In terms of tissue distribution, widely expressed, most prominently in skeletal muscle, heart and brain. Present in platelets. Expressed in transformed myeloid cells and in primary macrophages, but not in peripheral blood monocytes.

Its subcellular location is the cytoplasm. The protein resides in the cytosol. It localises to the cytoskeleton. It is found in the membrane. The protein localises to the cell projection. Its subcellular location is the filopodium. The protein resides in the lamellipodium. It localises to the basal cell membrane. It is found in the nucleus. The protein localises to the nucleus speckle. Its subcellular location is the spindle pole. The enzyme catalyses a 1,2-diacyl-sn-glycero-3-phospho-(1D-myo-inositol-3,4,5-trisphosphate) + H2O = a 1,2-diacyl-sn-glycero-3-phospho-(1D-myo-inositol-3,4-bisphosphate) + phosphate. It catalyses the reaction 1,2-dioctanoyl-sn-glycero-3-phospho-(1D-myo-inositol-3,4,5-trisphosphate) + H2O = 1,2-dioctanoyl-sn-glycero-3-phospho-(1D-myo-inositol-3,4-bisphosphate) + phosphate. It carries out the reaction 1,2-dihexadecanoyl-sn-glycero-3-phospho-(1D-myo-inositol-3,4,5-trisphosphate) + H2O = 1,2-dihexadecanoyl-sn-glycero-3-phospho-(1D-myo-inositol-3,4-bisphosphate) + phosphate. Its activity is regulated as follows. Activated upon translocation to the sites of synthesis of PtdIns(3,4,5)P3 in the membrane. Enzymatic activity is enhanced in the presence of phosphatidylserine. Its function is as follows. Phosphatidylinositol (PtdIns) phosphatase that specifically hydrolyzes the 5-phosphate of phosphatidylinositol-3,4,5-trisphosphate (PtdIns(3,4,5)P3) to produce PtdIns(3,4)P2, thereby negatively regulating the PI3K (phosphoinositide 3-kinase) pathways. Required for correct mitotic spindle orientation and therefore progression of mitosis. Plays a central role in regulation of PI3K-dependent insulin signaling, although the precise molecular mechanisms and signaling pathways remain unclear. While overexpression reduces both insulin-stimulated MAP kinase and Akt activation, its absence does not affect insulin signaling or GLUT4 trafficking. Confers resistance to dietary obesity. May act by regulating AKT2, but not AKT1, phosphorylation at the plasma membrane. Part of a signaling pathway that regulates actin cytoskeleton remodeling. Required for the maintenance and dynamic remodeling of actin structures as well as in endocytosis, having a major impact on ligand-induced EGFR internalization and degradation. Participates in regulation of cortical and submembraneous actin by hydrolyzing PtdIns(3,4,5)P3 thereby regulating membrane ruffling. Regulates cell adhesion and cell spreading. Required for HGF-mediated lamellipodium formation, cell scattering and spreading. Acts as a negative regulator of EPHA2 receptor endocytosis by inhibiting via PI3K-dependent Rac1 activation. Acts as a regulator of neuritogenesis by regulating PtdIns(3,4,5)P3 level and is required to form an initial protrusive pattern, and later, maintain proper neurite outgrowth. Acts as a negative regulator of the FC-gamma-RIIA receptor (FCGR2A). Mediates signaling from the FC-gamma-RIIB receptor (FCGR2B), playing a central role in terminating signal transduction from activating immune/hematopoietic cell receptor systems. Involved in EGF signaling pathway. Upon stimulation by EGF, it is recruited by EGFR and dephosphorylates PtdIns(3,4,5)P3. Plays a negative role in regulating the PI3K-PKB pathway, possibly by inhibiting PKB activity. Down-regulates Fc-gamma-R-mediated phagocytosis in macrophages independently of INPP5D/SHIP1. In macrophages, down-regulates NF-kappa-B-dependent gene transcription by regulating macrophage colony-stimulating factor (M-CSF)-induced signaling. Plays a role in the localization of AURKA and NEDD9/HEF1 to the basolateral membrane at interphase in polarized cysts, thereby mediates cell cycle homeostasis, cell polarization and cilia assembly. Additionally promotion of cilia growth is also facilitated by hydrolysis of (PtdIns(3,4,5)P3) to PtdIns(3,4)P2. Promotes formation of apical membrane-initiation sites during the initial stages of lumen formation via Rho family-induced actin filament organization and CTNNB1 localization to cell-cell contacts. May also hydrolyze PtdIns(1,3,4,5)P4, and could thus affect the levels of the higher inositol polyphosphates like InsP6. Involved in endochondral ossification. The polypeptide is Phosphatidylinositol 3,4,5-trisphosphate 5-phosphatase 2 (Homo sapiens (Human)).